The primary structure comprises 609 residues: UvrABC system protein C (609 aa).

The 79-residue stretch at 13–91 (HQPGVYRMFD…IKAFQPRYNV (79 aa)) folds into the GIY-YIG domain. The region spanning 201 to 236 (QQVLEHLIKKMEQASMQLNFEQAAYFRDQIQAIRAV) is the UVR domain.

This sequence belongs to the UvrC family. As to quaternary structure, interacts with UvrB in an incision complex.

The protein resides in the cytoplasm. In terms of biological role, the UvrABC repair system catalyzes the recognition and processing of DNA lesions. UvrC both incises the 5' and 3' sides of the lesion. The N-terminal half is responsible for the 3' incision and the C-terminal half is responsible for the 5' incision. The protein is UvrABC system protein C of Histophilus somni (strain 129Pt) (Haemophilus somnus).